A 256-amino-acid polypeptide reads, in one-letter code: 1-(5-phosphoribosyl)-5-[(5-phosphoribosylamino)methylideneamino] imidazole-4-carboxamide isomerase (256 aa).

Catalysis depends on Asp-8, which acts as the Proton acceptor. The active-site Proton donor is the Asp-129.

The protein belongs to the HisA/HisF family.

The protein resides in the cytoplasm. The catalysed reaction is 1-(5-phospho-beta-D-ribosyl)-5-[(5-phospho-beta-D-ribosylamino)methylideneamino]imidazole-4-carboxamide = 5-[(5-phospho-1-deoxy-D-ribulos-1-ylimino)methylamino]-1-(5-phospho-beta-D-ribosyl)imidazole-4-carboxamide. The protein operates within amino-acid biosynthesis; L-histidine biosynthesis; L-histidine from 5-phospho-alpha-D-ribose 1-diphosphate: step 4/9. This chain is 1-(5-phosphoribosyl)-5-[(5-phosphoribosylamino)methylideneamino] imidazole-4-carboxamide isomerase, found in Synechococcus elongatus (strain ATCC 33912 / PCC 7942 / FACHB-805) (Anacystis nidulans R2).